The chain runs to 387 residues: Succinate--CoA ligase [ADP-forming] subunit beta (387 aa).

In terms of domain architecture, ATP-grasp spans 9-244; sequence KAIFADNGIP…ITEENPAERE (236 aa). ATP is bound by residues Lys46, 53 to 55, Glu99, Ala102, and Glu107; that span reads GRG. Mg(2+) contacts are provided by Asn199 and Asp213. Residues Asn264 and 321 to 323 contribute to the substrate site; that span reads GIV.

This sequence belongs to the succinate/malate CoA ligase beta subunit family. Heterotetramer of two alpha and two beta subunits. It depends on Mg(2+) as a cofactor.

It catalyses the reaction succinate + ATP + CoA = succinyl-CoA + ADP + phosphate. The enzyme catalyses GTP + succinate + CoA = succinyl-CoA + GDP + phosphate. The protein operates within carbohydrate metabolism; tricarboxylic acid cycle; succinate from succinyl-CoA (ligase route): step 1/1. In terms of biological role, succinyl-CoA synthetase functions in the citric acid cycle (TCA), coupling the hydrolysis of succinyl-CoA to the synthesis of either ATP or GTP and thus represents the only step of substrate-level phosphorylation in the TCA. The beta subunit provides nucleotide specificity of the enzyme and binds the substrate succinate, while the binding sites for coenzyme A and phosphate are found in the alpha subunit. The chain is Succinate--CoA ligase [ADP-forming] subunit beta from Campylobacter jejuni subsp. jejuni serotype O:6 (strain 81116 / NCTC 11828).